The sequence spans 59 residues: Antitoxin Rv0909 (59 aa).

In terms of biological role, antitoxin component of a type II toxin-antitoxin (TA) system. Upon expression in M.smegmatis neutralizes the effect of cognate toxin Rv0910. This chain is Antitoxin Rv0909, found in Mycobacterium tuberculosis (strain ATCC 25618 / H37Rv).